Here is a 481-residue protein sequence, read N- to C-terminus: Wax ester synthase/diacylglycerol acyltransferase 1 (481 aa).

At 1–185 (MKAEKVMERE…TTATKKPADS (185 aa)) the chain is on the cytoplasmic side. His147 functions as the Proton acceptor in the catalytic mechanism. The helical transmembrane segment at 186–206 (MAWWLFVGFWFMIRVTFTTIV) threads the bilayer. Over 207–481 (EFSKLMLTVC…QGEIFHKTEV (275 aa)) the chain is Lumenal.

This sequence in the N-terminal section; belongs to the long-chain O-acyltransferase family. As to expression, expressed in flowers, siliques, top parts of stems, and leaves. Not found in roots, seeds and young seedlings.

It is found in the cell membrane. It localises to the endoplasmic reticulum membrane. It carries out the reaction a long chain fatty alcohol + a fatty acyl-CoA = a wax ester + CoA. The enzyme catalyses an acyl-CoA + a 1,2-diacyl-sn-glycerol = a triacyl-sn-glycerol + CoA. The protein operates within glycerolipid metabolism; triacylglycerol biosynthesis. It participates in lipid metabolism. Its function is as follows. Bifunctional wax ester synthase/diacylglycerol acyltransferase. Involved in cuticular wax biosynthesis. Required to reduce leaf water loss, especially during drought. This Arabidopsis thaliana (Mouse-ear cress) protein is Wax ester synthase/diacylglycerol acyltransferase 1.